The sequence spans 73 residues: Putative antitoxin VapB21 (73 aa).

The protein belongs to the UPF0330 family.

Its function is as follows. Possibly the antitoxin component of a type II toxin-antitoxin (TA) system. Its cognate toxin is VapC21 (Potential). The chain is Putative antitoxin VapB21 (vapB21) from Sulfurisphaera tokodaii (strain DSM 16993 / JCM 10545 / NBRC 100140 / 7) (Sulfolobus tokodaii).